Consider the following 560-residue polypeptide: Protein NRT1/ PTR FAMILY 2.5 (560 aa).

The segment at 1-20 is disordered; the sequence is MADSKSGDTEVAHRSSDPSE. A run of 12 helical transmembrane segments spans residues 34–54, 77–97, 101–121, 141–161, 177–197, 207–227, 323–343, 372–392, 404–424, 441–461, 480–500, and 520–540; these read TLLG…VFLI, MLPV…PVIS, FISL…YLMP, ILYV…FTLA, FFNW…TAIV, LGFG…IAGV, AILR…PVAV, VIVL…IYPM, LQQV…SAVV, VLWL…HFPA, SLTS…IDVI, and YWVV…CSWF.

Belongs to the major facilitator superfamily. Proton-dependent oligopeptide transporter (POT/PTR) (TC 2.A.17) family. In terms of tissue distribution, expressed in the root epidermis or cortex.

The protein localises to the membrane. In terms of biological role, transporter involved in a passive nitrate efflux. This chain is Protein NRT1/ PTR FAMILY 2.5 (NPF2.5), found in Arabidopsis thaliana (Mouse-ear cress).